The sequence spans 97 residues: Protein GLUTAMINE DUMPER 7 (97 aa).

At 1 to 25 (MSLHRDSMVPVNSRLENMDSPILSK) the chain is on the extracellular side. A helical membrane pass occupies residues 26–46 (ICAWGVMLGLFALSLFAMAYA). Residues 47–97 (CYHKQTSNSCIEEKQGKKQVLKPLDMEPKIVVIMAGNENPTFFAKPTQINA) are Cytoplasmic-facing. The VIMAG signature appears at 78 to 82 (VIMAG).

Belongs to the GLUTAMINE DUMPER 1 (TC 9.B.60) family. As to expression, expressed in the vascular tissues, even in the minor veins of the leaves.

It is found in the membrane. Its function is as follows. Probable subunit of an amino acid transporter involved in the regulation of the amino acid metabolism. Stimulates amino acid export by activating nonselective amino acid facilitators. The polypeptide is Protein GLUTAMINE DUMPER 7 (GDU7) (Arabidopsis thaliana (Mouse-ear cress)).